Consider the following 385-residue polypeptide: Glucans biosynthesis protein C (385 aa).

10 consecutive transmembrane segments (helical) span residues 17–37 (AWLM…SHTW), 60–80 (MQVF…RYPL), 91–111 (VGIP…IMLQ), 137–157 (ISHL…VWIF), 173–193 (KFSM…YAVI), 212–232 (FIVM…LAFI), 239–259 (LFTT…VAYL), 274–294 (TESV…FSFG), 311–331 (ASLF…AYIT), and 338–358 (WLGF…LYEI).

Belongs to the acyltransferase 3 family. OpgC subfamily.

Its subcellular location is the cell membrane. It participates in glycan metabolism; osmoregulated periplasmic glucan (OPG) biosynthesis. Its function is as follows. Necessary for the succinyl substitution of periplasmic glucans. Could catalyze the transfer of succinyl residues from the cytoplasmic side of the membrane to the nascent glucan backbones on the periplasmic side of the membrane. This chain is Glucans biosynthesis protein C, found in Escherichia coli O6:K15:H31 (strain 536 / UPEC).